The primary structure comprises 202 residues: MIGIAIPIKRLQFAKSRLAGVLAPAARQRLVLRLAQHVINAARQATGSFTMPARIWLVSADPAIAALAQASGVEWLPDRCEELNAALTEARKQIQNAGAQTMIVLAGDLPLVTAEDVAALYDALSEADLVLAPDQQQRGTNALALRLPSPLPFLFGLDSANRHVAAATQLGLRARLLTTPTLAFDLDDSERLRQYCAAERPA.

Phosphoenolpyruvate is bound by residues threonine 140, glycine 156, and serine 159.

The protein belongs to the CofC family.

The enzyme catalyses phosphoenolpyruvate + GTP + H(+) = enolpyruvoyl-2-diphospho-5'-guanosine + diphosphate. It participates in cofactor biosynthesis; coenzyme F420 biosynthesis. Guanylyltransferase that catalyzes the activation of phosphoenolpyruvate (PEP) as enolpyruvoyl-2-diphospho-5'-guanosine, via the condensation of PEP with GTP. It is involved in the biosynthesis of coenzyme F420, a hydride carrier cofactor. This Chloroflexus aggregans (strain MD-66 / DSM 9485) protein is Phosphoenolpyruvate guanylyltransferase.